The primary structure comprises 836 residues: ATP-binding cassette sub-family B member 6 (836 aa).

At 1–26 (MVTVGNYCEAEGPAGPAWTQNGLSPC) the chain is on the lumenal side. The interval 1-205 (MVTVGNYCEA…SGGLFILGLW (205 aa)) is required for the lysosomal targeting. The tract at residues 1–236 (MVTVGNYCEA…RNQGRSTDPR (236 aa)) is required for ATPase activity. C8 and C26 are joined by a disulfide. A helical transmembrane segment spans residues 27–47 (FFYTLVPSTLMTLGVLALVLV). The Cytoplasmic portion of the chain corresponds to 48-72 (LPCRRREVPAGTEELSWAAGPRVAP). The chain crosses the membrane as a helical span at residues 73–93 (YALQLSLAILQMALPLASLAG). Over 94-106 (RVGTARGVRLPGY) the chain is Lumenal. A helical membrane pass occupies residues 107 to 127 (LLLASVLESLASACGLWLLVV). Topologically, residues 128 to 147 (ERSQARQSLAMGVWMKFRHS) are cytoplasmic. Residues 148–168 (LGLLLLWTVTFAAENLVLVSW) form a helical membrane-spanning segment. The Lumenal portion of the chain corresponds to 169-185 (NSPQWWWSRADLGQQVQ). A helical transmembrane segment spans residues 186 to 206 (FGLWVLRYMTSGGLFILGLWA). The Cytoplasmic segment spans residues 207–264 (PGLRPQSYTLHVNEEDQDGGRNQGRSTDPRSTWRDLGRKLRLLSGYLWPRGSPSLQLT). Residues 265–285 (VLLCMGLMGLDRALNVLVPIF) traverse the membrane as a helical segment. Positions 265 to 556 (VLLCMGLMGL…FGTYYRMIQT (292 aa)) constitute an ABC transmembrane type-1 domain. Topologically, residues 286–305 (YRDIVNLLTSKAPWSSLAWT) are lumenal. The chain crosses the membrane as a helical span at residues 306–326 (VTTYVFLKFLQGGGTGSTGFV). Residues 327-375 (SNLRTFLWIRVQQFTSRGVELRLFSHLHELSLRWHLGRRTGEVLRIVDR) are Cytoplasmic-facing. Residues 376–396 (GTSSVTGLLSYLVFNIIPTLA) form a helical membrane-spanning segment. A topological domain (lumenal) is located at residue D397. Residues 398–418 (IIIGIIYFSMFFNAWFGLIVF) traverse the membrane as a helical segment. The Cytoplasmic portion of the chain corresponds to 419-499 (LCMSLYLILT…STASLVLLNQ (81 aa)). A helical transmembrane segment spans residues 500–520 (TQNMVIGFGLLAGSLLCAYFV). The Lumenal segment spans residues 521 to 529 (SERRLQVGD). A helical transmembrane segment spans residues 530-550 (FVLFGTYITQLYMPLNWFGTY). Over 551-836 (YRMIQTNFID…QGQETVPEDS (286 aa)) the chain is Cytoplasmic. The 235-residue stretch at 590 to 824 (VEFENVHFSY…GGVYAEMWQL (235 aa)) folds into the ABC transporter domain. Residues Y599 and 623 to 634 (GPSGAGKSTILR) contribute to the ATP site.

This sequence belongs to the ABC transporter superfamily. ABCB family. Heavy Metal importer (TC 3.A.1.210) subfamily. As to quaternary structure, homodimer. In terms of processing, N-glycosylated. In terms of tissue distribution, ubiquitously expressed. Highly expressed in testis by meiotic pachytene spermatocytes and post-meiotic early spermatids.

It is found in the cell membrane. The protein localises to the mitochondrion outer membrane. The protein resides in the endoplasmic reticulum membrane. Its subcellular location is the golgi apparatus membrane. It localises to the endosome membrane. It is found in the lysosome membrane. The protein localises to the late endosome membrane. The protein resides in the early endosome membrane. Its subcellular location is the secreted. It localises to the extracellular exosome. It is found in the mitochondrion. The protein localises to the endosome. The protein resides in the multivesicular body membrane. Its subcellular location is the melanosome membrane. It carries out the reaction heme b(in) + ATP + H2O = heme b(out) + ADP + phosphate + H(+). The catalysed reaction is coproporphyrin III(in) + ATP + H2O = coproporphyrin III(out) + ADP + phosphate + H(+). The enzyme catalyses pheophorbide a(in) + ATP + H2O = pheophorbide a(out) + ADP + phosphate + H(+). It catalyses the reaction coproporphyrinogen III(in) + ATP + H2O = coproporphyrinogen III(out) + ADP + phosphate + H(+). It carries out the reaction protoporphyrin IX(in) + ATP + H2O = protoporphyrin IX(out) + ADP + phosphate + H(+). The catalysed reaction is coproporphyrin I(in) + ATP + H2O = coproporphyrin I(out) + ADP + phosphate + H(+). The enzyme catalyses uroporphyrin I(in) + ATP + H2O = uroporphyrin I(out) + ADP + phosphate + H(+). It catalyses the reaction uroporphyrin III(in) + ATP + H2O = uroporphyrin III(out) + ADP + phosphate + H(+). Functionally, ATP-dependent transporter that catalyzes the transport of a broad-spectrum of porphyrins from the cytoplasm to the extracellular space through the plasma membrane or into the vesicle lumen. May also function as an ATP-dependent importer of porphyrins from the cytoplasm into the mitochondria, in turn may participate in the de novo heme biosynthesis regulation and in the coordination of heme and iron homeostasis during phenylhydrazine stress. May play a key role in the early steps of melanogenesis producing PMEL amyloid fibrils. In vitro, it confers to cells a resistance to toxic metal such as arsenic and cadmium and against chemotherapeutics agent such as 5-fluorouracil, SN-38 and vincristin. In addition may play a role in the transition metal homeostasis. The polypeptide is ATP-binding cassette sub-family B member 6 (Rattus norvegicus (Rat)).